The chain runs to 760 residues: Cyclin-D-binding Myb-like transcription factor 1 (760 aa).

Positions Met-1–Glu-237 are interaction with CCND2. Residues Val-87 to Arg-170 are required for transcriptional activation. Positions Val-87–Met-458 are required for DNA-binding. Residues Gly-176 to His-760 are interaction with CCND1, CCND2 and CCND3. The Myb-like 1 domain maps to Gly-225 to Arg-263. The region spanning Lys-268–Gln-333 is the HTH myb-type domain. The segment at residues Trp-306–Leu-329 is a DNA-binding region (H-T-H motif). The Myb-like 2 domain occupies Trp-339 to Lys-388. Disordered stretches follow at residues Lys-414–Ser-435 and Ile-738–His-760. Residues Ala-459–His-760 form a required for transcriptional activation region.

It belongs to the DMTF1 family. In terms of assembly, interacts with the D-type cyclins CCND1, CCND2 and CCND3. Interaction with D-type cyclins may modulate transcriptional activation by this protein. In terms of processing, phosphorylated by the cyclin-D2/CDK4, cyclin-D3/CDK4 and cyclin-D2/CDK6 complexes and to a lesser extent by the cyclin-D1/CDK4 complex. Expressed at relatively low levels in colonic mucosa, ovary, peripheral leukocytes, prostate and small intestine, and at higher levels in spleen, testis and thymus. Expressed in multiple regions of the brain and CNS including amygdala, caudate, corpus callosum, hippocampus, substantia nigra and subthalamic nucleus. Isoform 1 is the predominant isoform in monocytes, macrophages and neutrophils, isoform 2 is most strongly expressed in peripheral blood leukocytes and quiescent CD34 positive cells, and isoform 3 is expressed at low levels in all hematopoietic cell types. Expression is frequently reduced in non-small-cell lung carcinomas (NSCLC) due to hemizygous gene deletion, strongly suggesting that this locus is haploinsufficient for tumor suppression. Loss of this locus frequently occurs in tumors which retain wild-type CDKN2A/ARF and p53/TP53 loci. Hemizygous gene deletion has also been observed in leukemic blasts from patients with abnormalities of the long arm of chromosome 7.

Its subcellular location is the nucleus. Its function is as follows. Transcriptional activator which activates the CDKN2A/ARF locus in response to Ras-Raf signaling, thereby promoting p53/TP53-dependent growth arrest. Binds to the consensus sequence 5'-CCCG[GT]ATGT-3'. Isoform 1 may cooperate with MYB to activate transcription of the ANPEP gene. Isoform 2 may antagonize transcriptional activation by isoform 1. The protein is Cyclin-D-binding Myb-like transcription factor 1 (DMTF1) of Homo sapiens (Human).